A 103-amino-acid polypeptide reads, in one-letter code: Pyrimidine/purine nucleoside phosphorylase (103 aa).

It belongs to the nucleoside phosphorylase PpnP family.

It carries out the reaction a purine D-ribonucleoside + phosphate = a purine nucleobase + alpha-D-ribose 1-phosphate. It catalyses the reaction adenosine + phosphate = alpha-D-ribose 1-phosphate + adenine. The catalysed reaction is cytidine + phosphate = cytosine + alpha-D-ribose 1-phosphate. The enzyme catalyses guanosine + phosphate = alpha-D-ribose 1-phosphate + guanine. It carries out the reaction inosine + phosphate = alpha-D-ribose 1-phosphate + hypoxanthine. It catalyses the reaction thymidine + phosphate = 2-deoxy-alpha-D-ribose 1-phosphate + thymine. The catalysed reaction is uridine + phosphate = alpha-D-ribose 1-phosphate + uracil. The enzyme catalyses xanthosine + phosphate = alpha-D-ribose 1-phosphate + xanthine. Its function is as follows. Catalyzes the phosphorolysis of diverse nucleosides, yielding D-ribose 1-phosphate and the respective free bases. Can use uridine, adenosine, guanosine, cytidine, thymidine, inosine and xanthosine as substrates. Also catalyzes the reverse reactions. This is Pyrimidine/purine nucleoside phosphorylase from Shewanella oneidensis (strain ATCC 700550 / JCM 31522 / CIP 106686 / LMG 19005 / NCIMB 14063 / MR-1).